A 424-amino-acid chain; its full sequence is UDP-N-acetylglucosamine 1-carboxyvinyltransferase (424 aa).

Position 22-23 (Lys22–Asn23) interacts with phosphoenolpyruvate. Residue Arg93 participates in UDP-N-acetyl-alpha-D-glucosamine binding. Cys117 (proton donor) is an active-site residue. A 2-(S-cysteinyl)pyruvic acid O-phosphothioketal modification is found at Cys117. Residues Arg122–Leu126, Lys162–Val165, Asp307, and Ile329 contribute to the UDP-N-acetyl-alpha-D-glucosamine site.

This sequence belongs to the EPSP synthase family. MurA subfamily.

It is found in the cytoplasm. The enzyme catalyses phosphoenolpyruvate + UDP-N-acetyl-alpha-D-glucosamine = UDP-N-acetyl-3-O-(1-carboxyvinyl)-alpha-D-glucosamine + phosphate. Its pathway is cell wall biogenesis; peptidoglycan biosynthesis. Functionally, cell wall formation. Adds enolpyruvyl to UDP-N-acetylglucosamine. The chain is UDP-N-acetylglucosamine 1-carboxyvinyltransferase from Histophilus somni (strain 129Pt) (Haemophilus somnus).